A 388-amino-acid polypeptide reads, in one-letter code: Oligogalacturonate lyase (388 aa).

Its subcellular location is the periplasm. The catalysed reaction is 4-(4-deoxy-alpha-D-galact-4-enuronosyl)-D-galacturonate = 2 5-dehydro-4-deoxy-D-glucuronate. Its pathway is glycan metabolism; pectin degradation; 2-dehydro-3-deoxy-D-gluconate from pectin: step 3/5. Its function is as follows. Involved in degradation of pectin, which causes soft-rod disease in plants. In Dickeya dadantii (strain 3937) (Erwinia chrysanthemi (strain 3937)), this protein is Oligogalacturonate lyase (ogl).